A 344-amino-acid chain; its full sequence is Phenylalanine--tRNA ligase alpha subunit (344 aa).

Residue Glu-256 participates in Mg(2+) binding.

It belongs to the class-II aminoacyl-tRNA synthetase family. Phe-tRNA synthetase alpha subunit type 1 subfamily. In terms of assembly, tetramer of two alpha and two beta subunits. Mg(2+) serves as cofactor.

It is found in the cytoplasm. The enzyme catalyses tRNA(Phe) + L-phenylalanine + ATP = L-phenylalanyl-tRNA(Phe) + AMP + diphosphate + H(+). This Bacillus cytotoxicus (strain DSM 22905 / CIP 110041 / 391-98 / NVH 391-98) protein is Phenylalanine--tRNA ligase alpha subunit.